The chain runs to 349 residues: Anthranilate phosphoribosyltransferase (349 aa).

Residues Gly82, 85–86 (GD), 92–95 (NVSS), 110–118 (KHGNRAVSG), and Ser122 contribute to the 5-phospho-alpha-D-ribose 1-diphosphate site. Residue Gly82 participates in anthranilate binding. Residue Ser94 participates in Mg(2+) binding. Asn113 is a binding site for anthranilate. Position 168 (Arg168) interacts with anthranilate. Asp227 and Glu228 together coordinate Mg(2+).

This sequence belongs to the anthranilate phosphoribosyltransferase family. As to quaternary structure, homodimer. Mg(2+) is required as a cofactor.

The catalysed reaction is N-(5-phospho-beta-D-ribosyl)anthranilate + diphosphate = 5-phospho-alpha-D-ribose 1-diphosphate + anthranilate. It participates in amino-acid biosynthesis; L-tryptophan biosynthesis; L-tryptophan from chorismate: step 2/5. Functionally, catalyzes the transfer of the phosphoribosyl group of 5-phosphorylribose-1-pyrophosphate (PRPP) to anthranilate to yield N-(5'-phosphoribosyl)-anthranilate (PRA). The sequence is that of Anthranilate phosphoribosyltransferase from Pseudomonas paraeruginosa (strain DSM 24068 / PA7) (Pseudomonas aeruginosa (strain PA7)).